Here is a 218-residue protein sequence, read N- to C-terminus: MAEGPSLHPKLQVASNIPIEISSQIPQELAKNLPFQMSQSPLVTPGSTMQSSLSVPERNLLQQESEGPSRQSGCMPLSDKYVNKQTGLLASRNFRKERIVYSKEQQRLLQKHFDECQYPKEKKIVELAVLIGVTKMEIKKWFKNNRAKYRQMNLQNIKQALPESNGSSKAVSESTHFPGSIPVVASDNGESICSGTFGEDSIPKFNCSQESSLYCFQA.

Positions 40-72 (SPLVTPGSTMQSSLSVPERNLLQQESEGPSRQS) are enriched in polar residues. A disordered region spans residues 40–77 (SPLVTPGSTMQSSLSVPERNLLQQESEGPSRQSGCMPL). A DNA-binding region (homeobox) is located at residues 94-153 (FRKERIVYSKEQQRLLQKHFDECQYPKEKKIVELAVLIGVTKMEIKKWFKNNRAKYRQMN).

This sequence belongs to the paired homeobox family. Obox subfamily. In terms of tissue distribution, specifically expressed in oocytes and early embryos.

The protein resides in the nucleus. Functionally, transcription factor required for zygotic genome activation (ZGA), a critical event in early embryonic development during which the developmental control passes from maternally provided mRNAs to the expression of the zygotic genome after fertilization. Together with other Obox family members, required in early two-cell stage embryos to kick-start the major ZGA wave by facilitating RNA Polymerase II 'pre-configuration', during which RNA Polymerase II relocates from the initial one-cell stage binding targets to ZGA gene promoters and distal enhancers. Mechanistically, promotes recruitment of RNA Polymerase II from (CG-rich) non-ZGA genes to (CG-poor) ZGA genes at the two-cell stage. Binds to regulatory DNA sequences containing a 5'-ACNCCTTTAATCCCAG-3' sequence motif. Most maternal and zygotic Obox family proteins can compensate for one another. This is Oocyte-specific homeobox protein 7 from Mus musculus (Mouse).